Reading from the N-terminus, the 50-residue chain is Large ribosomal subunit protein eL39 (50 aa).

This sequence belongs to the eukaryotic ribosomal protein eL39 family.

The protein is Large ribosomal subunit protein eL39 of Methanoculleus marisnigri (strain ATCC 35101 / DSM 1498 / JR1).